A 101-amino-acid chain; its full sequence is MKICEICGLPKDLCVCEEIAREVQKVKVYTVRRRFGKLMTIVEGIDEHDIDIRELTKTLKSKCACGGTSKKGQIELQGDHKRKVKEVLAGMGFSSDTIEIK.

This sequence belongs to the SUI1 family.

The chain is Protein translation factor SUI1 homolog from Methanosphaera stadtmanae (strain ATCC 43021 / DSM 3091 / JCM 11832 / MCB-3).